The following is a 475-amino-acid chain: 3-isopropylmalate dehydratase large subunit (475 aa).

The [4Fe-4S] cluster site is built by C352, C412, and C415.

The protein belongs to the aconitase/IPM isomerase family. LeuC type 1 subfamily. In terms of assembly, heterodimer of LeuC and LeuD. It depends on [4Fe-4S] cluster as a cofactor.

The enzyme catalyses (2R,3S)-3-isopropylmalate = (2S)-2-isopropylmalate. The protein operates within amino-acid biosynthesis; L-leucine biosynthesis; L-leucine from 3-methyl-2-oxobutanoate: step 2/4. Functionally, catalyzes the isomerization between 2-isopropylmalate and 3-isopropylmalate, via the formation of 2-isopropylmaleate. The chain is 3-isopropylmalate dehydratase large subunit from Gluconobacter oxydans (strain 621H) (Gluconobacter suboxydans).